Reading from the N-terminus, the 253-residue chain is Triosephosphate isomerase, cytosolic (253 aa).

2 residues coordinate substrate: Asn10 and Lys12. The active-site Electrophile is the His96. Glu166 acts as the Proton acceptor in catalysis.

Belongs to the triosephosphate isomerase family. As to quaternary structure, homodimer.

Its subcellular location is the cytoplasm. The enzyme catalyses D-glyceraldehyde 3-phosphate = dihydroxyacetone phosphate. It functions in the pathway carbohydrate biosynthesis; gluconeogenesis. It participates in carbohydrate degradation; glycolysis; D-glyceraldehyde 3-phosphate from glycerone phosphate: step 1/1. The chain is Triosephosphate isomerase, cytosolic from Zea mays (Maize).